The sequence spans 320 residues: Cytochrome f (320 aa).

The N-terminal stretch at 1-35 (MQTRNTFSWIREEITRSISVSLMIYIITWASISSA) is a signal peptide. Heme is bound by residues tyrosine 36, cysteine 56, cysteine 59, and histidine 60. The chain crosses the membrane as a helical span at residues 286-306 (VQGLLFFLGSVVLAQIFLVLK).

This sequence belongs to the cytochrome f family. As to quaternary structure, the 4 large subunits of the cytochrome b6-f complex are cytochrome b6, subunit IV (17 kDa polypeptide, petD), cytochrome f and the Rieske protein, while the 4 small subunits are PetG, PetL, PetM and PetN. The complex functions as a dimer. Heme serves as cofactor.

The protein localises to the plastid. It is found in the chloroplast thylakoid membrane. Functionally, component of the cytochrome b6-f complex, which mediates electron transfer between photosystem II (PSII) and photosystem I (PSI), cyclic electron flow around PSI, and state transitions. This Crucihimalaya wallichii (Rock-cress) protein is Cytochrome f.